The primary structure comprises 500 residues: Perfringolysin O (500 aa).

The first 28 residues, M1 to S28, serve as a signal peptide directing secretion. 4 consecutive transmembrane segments (beta stranded) span residues K189 to V202, V209 to E218, S287 to A296, and K304 to S316. Residues E458 to R468 carry the Conserved undecapeptide motif. The Cholesterol binding motif lies at T490–L491.

It belongs to the cholesterol-dependent cytolysin family. Modeling based on cryo-EM shows a homooligomeric pore complex containing 38-44 subunits; when inserted in the host membrane.

Its subcellular location is the secreted. The protein localises to the host cell membrane. A cholesterol-dependent toxin that causes cytolysis by forming pores in cholesterol-containing host membranes. After binding to target membranes, the protein assembles into a pre-pore complex. A major conformational change leads to insertion in the host membrane and formation of an oligomeric pore complex. Cholesterol is required for binding to host cell membranes, membrane insertion and pore formation; cholesterol binding is mediated by a Thr-Leu pair in the C-terminus. Can be reversibly inactivated by oxidation. The sequence is that of Perfringolysin O (pfo) from Clostridium perfringens (strain 13 / Type A).